The sequence spans 215 residues: MPGEATETVPATEQELPQPQAETGSGTESDSDESVPELEEQDSTQATTQQAQLAAAAEIDEEPVSKAKQSRSEKKARKAMSKLGLRQVTGVTRVTIRKSKNILFVITKPDVYKSPASDTYIVFGEAKIEDLSQQAQLAAAEKFKVQGEAVSNIQENTQTPTVQEESEEEEVDETDVEVKDIELVMSQANVSRAKAVRALKNNSNDIVNAIMELTM.

Positions methionine 1–serine 81 are disordered. Residues valine 9–glutamate 28 show a composition bias toward polar residues. A compositionally biased stretch (acidic residues) spans serine 29–aspartate 42. At serine 43 the chain carries Phosphoserine; by ILK1. The segment covering threonine 44–alanine 57 has biased composition (low complexity). Residues glutamine 69 to methionine 80 form a required for DNA-binding region. Positions serine 70 to alanine 135 constitute an NAC-A/B domain. The segment at arginine 93–lysine 108 is RNA/DNA-binding. Serine 132 carries the post-translational modification Phosphoserine. At lysine 142 the chain carries N6-acetyllysine; alternate. Residue lysine 142 forms a Glycyl lysine isopeptide (Lys-Gly) (interchain with G-Cter in SUMO2); alternate linkage. Threonine 159 is subject to Phosphothreonine; by GSK3-beta. Threonine 161 carries the phosphothreonine modification. 4 positions are modified to phosphoserine: serine 166, serine 186, serine 191, and serine 203. One can recognise a UBA domain in the interval valine 176–leucine 213.

It belongs to the NAC-alpha family. In terms of assembly, part of the nascent polypeptide-associated complex (NAC), which is a heterodimer of NACA and BTF3 (via NAC-A/B domains). NAC associates with ribosomes through the BTF3/NACB subunit and contacts the ribosomal protein L23, which is positioned near the exiting site. Both subunits can contact nascent polypeptide chains. NACA may also form homodimers, and only this form binds DNA. Interacts with TBP and JUN. Phosphorylation of Ser-43 by ILK during cell adhesion may promote nuclear localization. Phosphorylation of Thr-159 by GSK3B may promote proteasome mediated degradation.

Its subcellular location is the cytoplasm. It localises to the nucleus. Prevents inappropriate targeting of non-secretory polypeptides to the endoplasmic reticulum (ER). Binds to nascent polypeptide chains as they emerge from the ribosome and blocks their interaction with the signal recognition particle (SRP), which normally targets nascent secretory peptides to the ER. Also reduces the inherent affinity of ribosomes for protein translocation sites in the ER membrane (M sites). May act as a specific coactivator for JUN, binding to DNA and stabilizing the interaction of JUN homodimers with target gene promoters. The sequence is that of Nascent polypeptide-associated complex subunit alpha (NACA) from Pongo abelii (Sumatran orangutan).